A 129-amino-acid polypeptide reads, in one-letter code: Snaclec coagulation factor IX-binding protein subunit A (129 aa).

One can recognise a C-type lectin domain in the interval 1 to 129 (DCPSGWSSYE…GQQNPFVCEA (129 aa)). Disulfide bonds link Cys2–Cys13, Cys30–Cys127, and Cys102–Cys119. Positions 41, 43, and 47 each coordinate Ca(2+). Glu128 serves as a coordination point for Ca(2+).

The protein belongs to the snaclec family. As to quaternary structure, heterodimer of subunits A and B; disulfide-linked. In terms of tissue distribution, expressed by the venom gland.

Its subcellular location is the secreted. Functionally, anticoagulant protein which binds to the gamma-carboxyglutamic acid-domain regions of factor IX (F9) (but not factor X) in the presence of calcium with a 1 to 1 stoichiometry. This Protobothrops flavoviridis (Habu) protein is Snaclec coagulation factor IX-binding protein subunit A.